The primary structure comprises 279 residues: Ribosomal RNA small subunit methyltransferase J (279 aa).

S-adenosyl-L-methionine contacts are provided by residues 138–139 and D194; that span reads ER.

Belongs to the methyltransferase superfamily. RsmJ family.

The protein localises to the cytoplasm. The catalysed reaction is guanosine(1516) in 16S rRNA + S-adenosyl-L-methionine = N(2)-methylguanosine(1516) in 16S rRNA + S-adenosyl-L-homocysteine + H(+). Its function is as follows. Specifically methylates the guanosine in position 1516 of 16S rRNA. This chain is Ribosomal RNA small subunit methyltransferase J, found in Acinetobacter baumannii (strain AYE).